A 280-amino-acid chain; its full sequence is MALAIRSSLRAAAMGRKAFRQAVPVRVAPAQRVRSVTTASAEITAYSVEEKGPKDSLEYRMFFKQGAKEVSCWHEIPLYAGDGHLHYICEIPKETSAKMEVATDEPRTPIKQDVKKGKLRFYPYNINWNYGMLPQTWEDPGHTDATLGAAGDNDPVDVVEIGAAAAKRGGVYKVKPVGVLAMIDDGELDWKVIAISADDPKAALCNDVEDVEKHFPGEIQKVLEWFRDYKIPDGKPANKFGYDNKCMNKEFTLNVIKETHEAYVKLKSGARANSEELSLI.

R120 lines the diphosphate pocket. D152, D157, and D189 together coordinate Mg(2+).

In terms of assembly, monomer. It depends on Mg(2+) as a cofactor. The N-terminus is blocked.

It is found in the plastid. The protein resides in the chloroplast. The enzyme catalyses diphosphate + H2O = 2 phosphate + H(+). This Chlamydomonas reinhardtii (Chlamydomonas smithii) protein is Soluble inorganic pyrophosphatase 1, chloroplastic (ppa1).